Here is a 133-residue protein sequence, read N- to C-terminus: MAKRKQATATRTRRRDRKNVEVGVAHIRSTFNNTIVTITDPHGNAISWSSAGSLGFKGSRKSTPFAAQMAAEAAARVAMEHGMRSLEVSVKGPGAGREAAIRSLQATGLEVNMIKDVTPIPHNGCRPPKRRRV.

This sequence belongs to the universal ribosomal protein uS11 family. As to quaternary structure, part of the 30S ribosomal subunit. Interacts with proteins S7 and S18. Binds to IF-3.

Functionally, located on the platform of the 30S subunit, it bridges several disparate RNA helices of the 16S rRNA. Forms part of the Shine-Dalgarno cleft in the 70S ribosome. This chain is Small ribosomal subunit protein uS11, found in Brevibacillus brevis (strain 47 / JCM 6285 / NBRC 100599).